The sequence spans 139 residues: Large ribosomal subunit protein mL54 (139 aa).

The N-terminal 50 residues, 1–50 (MPFIESMAPLSRAITRGISQFSCYSNTLVLRSSRNSSSSLVKRSYVSSRV), are a transit peptide targeting the mitochondrion. Positions 35–50 (NSSSSLVKRSYVSSRV) are enriched in low complexity. Residues 35 to 74 (NSSSSLVKRSYVSSRVSPKKPQHNSDATSSAQKVANKTHT) form a disordered region. Residues 58–74 (NSDATSSAQKVANKTHT) show a composition bias toward polar residues.

It belongs to the mitochondrion-specific ribosomal protein mL54 family. Component of the mitochondrial large ribosomal subunit (mt-LSU). Mature yeast 74S mitochondrial ribosomes consist of a small (37S) and a large (54S) subunit. The 37S small subunit contains a 15S ribosomal RNA (15S mt-rRNA) and at least 32 different proteins. The 54S large subunit contains a 21S rRNA (21S mt-rRNA) and at least 45 different proteins.

It is found in the mitochondrion. In terms of biological role, component of the mitochondrial ribosome (mitoribosome), a dedicated translation machinery responsible for the synthesis of mitochondrial genome-encoded proteins, including at least some of the essential transmembrane subunits of the mitochondrial respiratory chain. The mitoribosomes are attached to the mitochondrial inner membrane and translation products are cotranslationally integrated into the membrane. mL54 may have a meiosis-specific role as it accumulates during the middle stage of sporulation. The polypeptide is Large ribosomal subunit protein mL54 (mrpl37) (Schizosaccharomyces pombe (strain 972 / ATCC 24843) (Fission yeast)).